Reading from the N-terminus, the 1085-residue chain is DNA polymerase (1085 aa).

Positions 1059–1085 (YDQKRPNPRPQEPLLENPFWDDSSQTA) are disordered.

It belongs to the DNA polymerase type-B family. Heterodimer with the terminal protein; this heterodimer binds to bp 9 to 18 of the genome. Forms a complex with viral pTP, DBP and hosts NFIA and POU2F1/OCT1 for initiation of replication.

The protein localises to the host nucleus. The enzyme catalyses DNA(n) + a 2'-deoxyribonucleoside 5'-triphosphate = DNA(n+1) + diphosphate. Functionally, eukaryotic-type DNA polymerase involved in viral genomic replication. DNA synthesis is protein primed, and acts in a strand displacement replication. Eukaryotic-type DNA polymerase involved in viral genomic replication. DNA synthesis is protein primed, and acts in a strand displacement replication. Assembles in complex with viral pTP, DBP, host NFIA and host POU2F1/OCT1 on viral origin of replication. The polymerase covalently transfers dCMP onto pTP, thereby initiating complementary strand synthesis. The polypeptide is DNA polymerase (Pantherophis guttatus (Corn snake)).